A 341-amino-acid polypeptide reads, in one-letter code: Methionine import ATP-binding protein MetN 1 (341 aa).

Positions 2–241 constitute an ABC transporter domain; it reads IKLNQIVKRY…PQHEVTKRFV (240 aa). An ATP-binding site is contributed by 38-45; it reads GFSGAGKS.

Belongs to the ABC transporter superfamily. Methionine importer (TC 3.A.1.24) family. The complex is composed of two ATP-binding proteins (MetN), two transmembrane proteins (MetI) and a solute-binding protein (MetQ).

The protein resides in the cell membrane. It carries out the reaction L-methionine(out) + ATP + H2O = L-methionine(in) + ADP + phosphate + H(+). The catalysed reaction is D-methionine(out) + ATP + H2O = D-methionine(in) + ADP + phosphate + H(+). Functionally, part of the ABC transporter complex MetNIQ involved in methionine import. Responsible for energy coupling to the transport system. This is Methionine import ATP-binding protein MetN 1 from Staphylococcus epidermidis (strain ATCC 12228 / FDA PCI 1200).